Reading from the N-terminus, the 482-residue chain is ATP synthase subunit beta (482 aa).

162-169 (GGAGVGKT) is a binding site for ATP.

As to quaternary structure, F-type ATPases have 2 components, CF(1) - the catalytic core - and CF(0) - the membrane proton channel. CF(1) has five subunits: alpha(3), beta(3), gamma(1), delta(1), epsilon(1). CF(0) has four main subunits: a(1), b(1), b'(1) and c(9-12).

The protein resides in the cellular thylakoid membrane. It carries out the reaction ATP + H2O + 4 H(+)(in) = ADP + phosphate + 5 H(+)(out). Inhibited by dicyclohexylcarbodiimide. In terms of biological role, produces ATP from ADP in the presence of a proton gradient across the membrane. The catalytic sites are hosted primarily by the beta subunits. The complex from the organism is particularly stable to disruption and remains functional after 6 hrs at 55 degrees Celsius. This chain is ATP synthase subunit beta, found in Thermosynechococcus vestitus (strain NIES-2133 / IAM M-273 / BP-1).